Reading from the N-terminus, the 927-residue chain is E3 ubiquitin-protein ligase HOS1 (927 aa).

The RING-type; degenerate zinc-finger motif lies at C53–R93. 3 disordered regions span residues S678–A699, F782–V806, and V832–R927. The segment covering K797–V806 has biased composition (basic and acidic residues). 2 stretches are compositionally biased toward polar residues: residues V832–F851 and N878–G892. Positions K917–R927 are enriched in basic residues.

Interacts with SCRM/ICE1, FLK and MSI4/FVE. In terms of tissue distribution, ubiquitously expressed with higher levels in leaf vasculature, roots and root tips.

It localises to the nucleus. It is found in the cytoplasm. It carries out the reaction S-ubiquitinyl-[E2 ubiquitin-conjugating enzyme]-L-cysteine + [acceptor protein]-L-lysine = [E2 ubiquitin-conjugating enzyme]-L-cysteine + N(6)-ubiquitinyl-[acceptor protein]-L-lysine.. It participates in protein modification; protein ubiquitination. Its function is as follows. E3 ubiquitin-protein ligase that mediates ubiquitination and subsequent proteasomal degradation of the transcription factor ICE1. Acts as a negative regulator of cold signaling pathways. Probably involved in recruiting the NUP107-160 subcomplex of the nuclear pore complex to chromatin. Controls flowering time in response to ambient temperatures (16 and 23 degrees Celsius) and intermittent cold, probably via the regulation of FT and TSF levels. This Arabidopsis thaliana (Mouse-ear cress) protein is E3 ubiquitin-protein ligase HOS1 (HOS1).